Here is a 104-residue protein sequence, read N- to C-terminus: Small ribosomal subunit protein uS10 (104 aa).

This sequence belongs to the universal ribosomal protein uS10 family. Part of the 30S ribosomal subunit.

Involved in the binding of tRNA to the ribosomes. The chain is Small ribosomal subunit protein uS10 from Variovorax paradoxus (strain S110).